Reading from the N-terminus, the 123-residue chain is UPF0299 membrane protein VV1471 (123 aa).

Transmembrane regions (helical) follow at residues 8–28 (LFGL…GSGI), 35–55 (SVPG…IGLV), 71–91 (MILL…MLIA), and 94–114 (LPII…LGWL).

This sequence belongs to the UPF0299 family.

The protein resides in the cell inner membrane. The polypeptide is UPF0299 membrane protein VV1471 (Vibrio vulnificus (strain YJ016)).